Reading from the N-terminus, the 261-residue chain is 2,3-dihydro-2,3-dihydroxybenzoate dehydrogenase (261 aa).

Phe12–Ala36 contacts NAD(+). A substrate-binding site is contributed by Ser144. Catalysis depends on Tyr157, which acts as the Proton acceptor.

Belongs to the short-chain dehydrogenases/reductases (SDR) family.

Its subcellular location is the cytoplasm. The catalysed reaction is (2S,3S)-2,3-dihydroxy-2,3-dihydrobenzoate + NAD(+) = 2,3-dihydroxybenzoate + NADH + H(+). Its pathway is siderophore biosynthesis; bacillibactin biosynthesis. In Bacillus subtilis (strain 168), this protein is 2,3-dihydro-2,3-dihydroxybenzoate dehydrogenase (dhbA).